Here is a 940-residue protein sequence, read N- to C-terminus: Alanine--tRNA ligase (940 aa).

Zn(2+) is bound by residues His581, His585, Cys683, and His687.

It belongs to the class-II aminoacyl-tRNA synthetase family. Zn(2+) is required as a cofactor.

It localises to the cytoplasm. The catalysed reaction is tRNA(Ala) + L-alanine + ATP = L-alanyl-tRNA(Ala) + AMP + diphosphate. Its function is as follows. Catalyzes the attachment of alanine to tRNA(Ala) in a two-step reaction: alanine is first activated by ATP to form Ala-AMP and then transferred to the acceptor end of tRNA(Ala). Also edits incorrectly charged Ser-tRNA(Ala) and Gly-tRNA(Ala) via its editing domain. The polypeptide is Alanine--tRNA ligase (Leptospira borgpetersenii serovar Hardjo-bovis (strain L550)).